A 184-amino-acid polypeptide reads, in one-letter code: 20.9 kDa protein (184 aa).

This chain is 20.9 kDa protein, found in Zymomonas mobilis subsp. mobilis (strain ATCC 10988 / DSM 424 / LMG 404 / NCIMB 8938 / NRRL B-806 / ZM1).